The primary structure comprises 112 residues: uncharacterized protein (112 aa).

Phosphoserine occurs at positions 51 and 53. A helical transmembrane segment spans residues 90–110 (FIFTLSMFLIAFILLIAFVSF).

It is found in the golgi apparatus membrane. It localises to the endoplasmic reticulum membrane. This is an uncharacterized protein from Schizosaccharomyces pombe (strain 972 / ATCC 24843) (Fission yeast).